The following is a 223-amino-acid chain: MIITIDALLDAAQLNKIQSSLQTAEFIDGRATAGWHAQLVKQNQQLSRTSTLAKSLQEIVQTALQNNALFEAAAYPQRVHSLLFSRYEPGMEYGRHVDNALMGSGDRRDRADLSFTLFLSDPDRYIGGALVIEGACDEQAYRLPAGSLLLYPSSTLHRVDPVEQGYRFACVGWVQSWIRDPAKRELLFDLDTARRSLFTREGKSIEFDLLSKTYANLLRRWSE.

Residues 78–176 form the Fe2OG dioxygenase domain; it reads RVHSLLFSRY…RFACVGWVQS (99 aa). 3 residues coordinate Fe cation: His-96, Asp-98, and His-157. Residue Arg-167 participates in 2-oxoglutarate binding.

Fe(2+) serves as cofactor. It depends on L-ascorbate as a cofactor.

This Synechococcus sp. (strain ATCC 27144 / PCC 6301 / SAUG 1402/1) (Anacystis nidulans) protein is PKHD-type hydroxylase syc1482_d.